The chain runs to 501 residues: Probable cysteine desulfurase, mitochondrial (501 aa).

Pyridoxal 5'-phosphate-binding positions include 172 to 173 (AT), Asn252, Gln280, and 300 to 302 (SAH). An N6-(pyridoxal phosphate)lysine modification is found at Lys303. Pyridoxal 5'-phosphate is bound at residue Thr340. The Cysteine persulfide intermediate role is filled by Cys425. Residue Cys425 coordinates [2Fe-2S] cluster.

The protein belongs to the class-V pyridoxal-phosphate-dependent aminotransferase family. NifS/IscS subfamily. Requires pyridoxal 5'-phosphate as cofactor.

It is found in the mitochondrion. The enzyme catalyses (sulfur carrier)-H + L-cysteine = (sulfur carrier)-SH + L-alanine. Catalyzes the removal of elemental sulfur from cysteine to produce alanine. It supplies the inorganic sulfur for iron-sulfur (Fe-S) clusters. Plays a role in both tRNA-processing and mitochondrial metabolism. Involved in the 2-thio-modification of both 5-carboxymethylaminomethyl-2-thiouridine in mitochondrial tRNAs and 5-methoxycarbonylmethyl-2-thiouridine (mcm5s2U) in cytoplasmic tRNAs. The sequence is that of Probable cysteine desulfurase, mitochondrial from Schizosaccharomyces pombe (strain 972 / ATCC 24843) (Fission yeast).